Here is a 149-residue protein sequence, read N- to C-terminus: Large ribosomal subunit protein uL11 (149 aa).

It belongs to the universal ribosomal protein uL11 family. As to quaternary structure, part of the ribosomal stalk of the 50S ribosomal subunit. Interacts with L10 and the large rRNA to form the base of the stalk. L10 forms an elongated spine to which L12 dimers bind in a sequential fashion forming a multimeric L10(L12)X complex. In terms of processing, one or more lysine residues are methylated.

Forms part of the ribosomal stalk which helps the ribosome interact with GTP-bound translation factors. The protein is Large ribosomal subunit protein uL11 of Xanthobacter autotrophicus (strain ATCC BAA-1158 / Py2).